Reading from the N-terminus, the 498-residue chain is Resveratrol cleavage oxygenase 1 (498 aa).

Piceatannol contacts are provided by tyrosine 105 and lysine 136. 2 residues coordinate trans-resveratrol: tyrosine 105 and lysine 136. Fe cation is bound by residues histidine 169, histidine 220, and histidine 285. Glutamate 355 is a binding site for piceatannol. Glutamate 355 lines the trans-resveratrol pocket. Histidine 481 provides a ligand contact to Fe cation.

This sequence belongs to the carotenoid oxygenase family. Requires Fe(2+) as cofactor.

The catalysed reaction is trans-resveratrol + O2 = 3,5-dihydroxybenzaldehyde + 4-hydroxybenzaldehyde. It carries out the reaction piceatannol + O2 = 3,5-dihydroxybenzaldehyde + 3,4-dihydroxybenzaldehyde. In terms of biological role, dioxygenase that cleaves the interphenyl C-alpha-C-beta double bond of resveratrol to yield 3,5-dihydroxybenzaldehyde and 4-hydroxybenzaldehyde. Also cleaves piceatannol, a compound that differs from resveratrol only in the occurrence of an additional hydroxyl group, which leads to the production of 3,4-dihydroxybenzaldehyde and 3,5-hydroxybenzaldehyde. The protein is Resveratrol cleavage oxygenase 1 of Aspergillus fumigatus (strain ATCC MYA-4609 / CBS 101355 / FGSC A1100 / Af293) (Neosartorya fumigata).